The sequence spans 207 residues: A-type ATP synthase subunit E (207 aa).

This sequence belongs to the V-ATPase E subunit family. Has multiple subunits with at least A(3), B(3), C, D, E, F, H, I and proteolipid K(x).

It localises to the cell membrane. Functionally, component of the A-type ATP synthase that produces ATP from ADP in the presence of a proton gradient across the membrane. The polypeptide is A-type ATP synthase subunit E (Hyperthermus butylicus (strain DSM 5456 / JCM 9403 / PLM1-5)).